We begin with the raw amino-acid sequence, 340 residues long: Phenylalanine--tRNA ligase alpha subunit (340 aa).

Glu255 provides a ligand contact to Mg(2+).

The protein belongs to the class-II aminoacyl-tRNA synthetase family. Phe-tRNA synthetase alpha subunit type 1 subfamily. In terms of assembly, tetramer of two alpha and two beta subunits. Requires Mg(2+) as cofactor.

The protein localises to the cytoplasm. It catalyses the reaction tRNA(Phe) + L-phenylalanine + ATP = L-phenylalanyl-tRNA(Phe) + AMP + diphosphate + H(+). The protein is Phenylalanine--tRNA ligase alpha subunit of Exiguobacterium sibiricum (strain DSM 17290 / CCUG 55495 / CIP 109462 / JCM 13490 / 255-15).